We begin with the raw amino-acid sequence, 498 residues long: UDP-N-acetylmuramate--L-alanine ligase (498 aa).

120–126 (GSHGKTT) lines the ATP pocket.

This sequence belongs to the MurCDEF family.

The protein localises to the cytoplasm. It catalyses the reaction UDP-N-acetyl-alpha-D-muramate + L-alanine + ATP = UDP-N-acetyl-alpha-D-muramoyl-L-alanine + ADP + phosphate + H(+). The protein operates within cell wall biogenesis; peptidoglycan biosynthesis. In terms of biological role, cell wall formation. In Rickettsia typhi (strain ATCC VR-144 / Wilmington), this protein is UDP-N-acetylmuramate--L-alanine ligase.